Consider the following 501-residue polypeptide: Cilia- and flagella-associated protein 45 (501 aa).

Residues 75 to 114 (MTAEDVAAAKREAEAKREQLQAVSKARKEKMLKLEEEAKK) are a coiled coil.

It belongs to the CFAP45 family.

The protein resides in the cell projection. It is found in the cilium. The protein localises to the flagellum. The polypeptide is Cilia- and flagella-associated protein 45 (Chlamydomonas reinhardtii (Chlamydomonas smithii)).